The primary structure comprises 377 residues: Putrescine transport ATP-binding protein PotG (377 aa).

Residues 20-250 enclose the ABC transporter domain; sequence LEIRNLTKSY…PTTRYSAEFI (231 aa). 52–59 is an ATP binding site; the sequence is GASGCGKS.

Belongs to the ABC transporter superfamily. As to quaternary structure, the complex is composed of two ATP-binding proteins (PotG), two transmembrane proteins (PotH and PotI) and a solute-binding protein (PotF).

It is found in the cell inner membrane. The enzyme catalyses putrescine(out) + ATP + H2O = putrescine(in) + ADP + phosphate + H(+). Transport is feedback inhibited by intracellular polyamines. In terms of biological role, part of the ABC transporter complex PotFGHI involved in putrescine uptake. Responsible for energy coupling to the transport system. Imports putrescine for maintenance of the optimal concentration of polyamines necessary for cell growth in the presence of glucose. In Escherichia coli (strain K12), this protein is Putrescine transport ATP-binding protein PotG.